The sequence spans 147 residues: Large ribosomal subunit protein uL13 (147 aa).

This sequence belongs to the universal ribosomal protein uL13 family. In terms of assembly, part of the 50S ribosomal subunit.

Its function is as follows. This protein is one of the early assembly proteins of the 50S ribosomal subunit, although it is not seen to bind rRNA by itself. It is important during the early stages of 50S assembly. This is Large ribosomal subunit protein uL13 from Kineococcus radiotolerans (strain ATCC BAA-149 / DSM 14245 / SRS30216).